A 452-amino-acid chain; its full sequence is Phosphoglucosamine mutase (452 aa).

Ser104 (phosphoserine intermediate) is an active-site residue. Residues Ser104, Asp241, Asp243, and Asp245 each coordinate Mg(2+). Residue Ser104 is modified to Phosphoserine.

The protein belongs to the phosphohexose mutase family. Requires Mg(2+) as cofactor. Post-translationally, activated by phosphorylation.

The catalysed reaction is alpha-D-glucosamine 1-phosphate = D-glucosamine 6-phosphate. Functionally, catalyzes the conversion of glucosamine-6-phosphate to glucosamine-1-phosphate. This Arthrobacter sp. (strain FB24) protein is Phosphoglucosamine mutase.